The chain runs to 216 residues: Adenylate kinase (216 aa).

10-15 (GAGKGT) contributes to the ATP binding site. The segment at 30-59 (STGDMLRAAVKAGTELGIKAKSIMDAGGLV) is NMP. AMP contacts are provided by residues Thr31, Arg36, 57–59 (GLV), 85–88 (GFPR), and Gln92. The segment at 122-159 (GRRVHEASGRVYHIVYNPPKIAGKDDITGEELVQRKDD) is LID. ATP is bound by residues Arg123 and 132–133 (VY). 2 residues coordinate AMP: Arg156 and Arg167. Residue Gly202 coordinates ATP.

It belongs to the adenylate kinase family. Monomer.

Its subcellular location is the cytoplasm. It carries out the reaction AMP + ATP = 2 ADP. The protein operates within purine metabolism; AMP biosynthesis via salvage pathway; AMP from ADP: step 1/1. Functionally, catalyzes the reversible transfer of the terminal phosphate group between ATP and AMP. Plays an important role in cellular energy homeostasis and in adenine nucleotide metabolism. This Pseudomonas fluorescens (strain Pf0-1) protein is Adenylate kinase.